Consider the following 314-residue polypeptide: 4-hydroxy-3-methylbut-2-enyl diphosphate reductase (314 aa).

Residue cysteine 12 coordinates [4Fe-4S] cluster. (2E)-4-hydroxy-3-methylbut-2-enyl diphosphate contacts are provided by histidine 43 and histidine 81. The dimethylallyl diphosphate site is built by histidine 43 and histidine 81. Positions 43 and 81 each coordinate isopentenyl diphosphate. Cysteine 103 contacts [4Fe-4S] cluster. Position 131 (histidine 131) interacts with (2E)-4-hydroxy-3-methylbut-2-enyl diphosphate. Histidine 131 contributes to the dimethylallyl diphosphate binding site. Residue histidine 131 participates in isopentenyl diphosphate binding. Glutamate 133 serves as the catalytic Proton donor. Residue threonine 170 coordinates (2E)-4-hydroxy-3-methylbut-2-enyl diphosphate. Position 198 (cysteine 198) interacts with [4Fe-4S] cluster. 3 residues coordinate (2E)-4-hydroxy-3-methylbut-2-enyl diphosphate: serine 226, asparagine 228, and serine 271. Dimethylallyl diphosphate-binding residues include serine 226, asparagine 228, and serine 271. Residues serine 226, asparagine 228, and serine 271 each contribute to the isopentenyl diphosphate site.

Belongs to the IspH family. [4Fe-4S] cluster serves as cofactor.

The catalysed reaction is isopentenyl diphosphate + 2 oxidized [2Fe-2S]-[ferredoxin] + H2O = (2E)-4-hydroxy-3-methylbut-2-enyl diphosphate + 2 reduced [2Fe-2S]-[ferredoxin] + 2 H(+). It carries out the reaction dimethylallyl diphosphate + 2 oxidized [2Fe-2S]-[ferredoxin] + H2O = (2E)-4-hydroxy-3-methylbut-2-enyl diphosphate + 2 reduced [2Fe-2S]-[ferredoxin] + 2 H(+). Its pathway is isoprenoid biosynthesis; dimethylallyl diphosphate biosynthesis; dimethylallyl diphosphate from (2E)-4-hydroxy-3-methylbutenyl diphosphate: step 1/1. It functions in the pathway isoprenoid biosynthesis; isopentenyl diphosphate biosynthesis via DXP pathway; isopentenyl diphosphate from 1-deoxy-D-xylulose 5-phosphate: step 6/6. Functionally, catalyzes the conversion of 1-hydroxy-2-methyl-2-(E)-butenyl 4-diphosphate (HMBPP) into a mixture of isopentenyl diphosphate (IPP) and dimethylallyl diphosphate (DMAPP). Acts in the terminal step of the DOXP/MEP pathway for isoprenoid precursor biosynthesis. In Halalkalibacterium halodurans (strain ATCC BAA-125 / DSM 18197 / FERM 7344 / JCM 9153 / C-125) (Bacillus halodurans), this protein is 4-hydroxy-3-methylbut-2-enyl diphosphate reductase.